We begin with the raw amino-acid sequence, 195 residues long: ATP-dependent Clp protease proteolytic subunit (195 aa).

The active-site Nucleophile is Ser101. The active site involves His126.

This sequence belongs to the peptidase S14 family. In terms of assembly, component of the chloroplastic Clp protease core complex.

The protein localises to the plastid. It is found in the chloroplast stroma. The enzyme catalyses Hydrolysis of proteins to small peptides in the presence of ATP and magnesium. alpha-casein is the usual test substrate. In the absence of ATP, only oligopeptides shorter than five residues are hydrolyzed (such as succinyl-Leu-Tyr-|-NHMec, and Leu-Tyr-Leu-|-Tyr-Trp, in which cleavage of the -Tyr-|-Leu- and -Tyr-|-Trp bonds also occurs).. Cleaves peptides in various proteins in a process that requires ATP hydrolysis. Has a chymotrypsin-like activity. Plays a major role in the degradation of misfolded proteins. The chain is ATP-dependent Clp protease proteolytic subunit from Cucumis sativus (Cucumber).